The following is a 545-amino-acid chain: Intercellular adhesion molecule 1 (545 aa).

Positions 1–27 are cleaved as a signal peptide; that stretch reads MASTRARPMLPLLLVLVAVVIPGPVGA. At 28 to 492 the chain is on the extracellular side; sequence QVSIHPTEAF…HLTVLYHDQN (465 aa). Ig-like C2-type domains lie at 41 to 103 and 128 to 193; these read GGSV…QSSA and GKNL…LDLR. The N-linked (GlcNAc...) asparagine glycan is linked to Asn47. Intrachain disulfides connect Cys48/Cys92, Cys52/Cys96, and Cys135/Cys186. Asn154 carries N-linked (GlcNAc...) asparagine glycosylation. Residues 177–179 carry the Cell attachment site motif; sequence RGD. N-linked (GlcNAc...) asparagine glycosylation is found at Asn183 and Asn202. An Ig-like C2-type 3 domain is found at 230–297; it reads GTQQKFLCSL…LRCVLELADQ (68 aa). An intrachain disulfide couples Cys237 to Cys290. N-linked (GlcNAc...) asparagine glycosylation is found at Asn309, Asn344, Asn396, Asn417, Asn439, and Asn464. Residues 325–389 form the Ig-like C2-type 4 domain; sequence GDQVTVKCEA…FFCSAALEVD (65 aa). Cys332 and Cys382 are joined by a disulfide. The segment at 343–365 is disordered; it reads LNSTSPRPPTSQGTSPRPPTSQI. Cystine bridges form between Cys414–Cys430, Cys430–Cys469, and Cys442–Cys469. In terms of domain architecture, Ig-like C2-type 5 spans 423-476; that stretch reads GSQQTLTCQPQGNPAPNLTCSRKADGVPLPIGMVKSVKREMNGTYKCRAFSSRG. The helical transmembrane segment at 493–517 threads the bilayer; sequence TWVIIVGVLVLIIAGFVIVASIYTY. At 518–545 the chain is on the cytoplasmic side; it reads YRQRKIRIYKLQKAQEEALKLKVQAPPP.

It belongs to the immunoglobulin superfamily. ICAM family. As to quaternary structure, homodimer. Interacts with MUC1 and promotes cell aggregation in epithelial cells. Interacts with ARHGEF26/SGEF. Interacts (on T cell side) with CD81, CD247 and CD9 at immunological synapses between antigen-presenting cells and T cells. Monoubiquitinated, which is promoted by MARCH9 and leads to endocytosis.

Its subcellular location is the membrane. In terms of biological role, ICAM proteins are ligands for the leukocyte adhesion protein LFA-1 (integrin alpha-L/beta-2). During leukocyte trans-endothelial migration, ICAM1 engagement promotes the assembly of endothelial apical cups through ARHGEF26/SGEF and RHOG activation. This Rattus norvegicus (Rat) protein is Intercellular adhesion molecule 1 (Icam1).